Here is a 518-residue protein sequence, read N- to C-terminus: Integrator complex subunit 14 (518 aa).

The VWFA domain occupies 2-204; it reads PTVVVMDVSL…KNVQSMFGKL (203 aa). S10, S12, and T86 together coordinate Mg(2+). Position 418 is an N6-acetyllysine (K418).

It belongs to the Integrator subunit 14 family. As to quaternary structure, component of the Integrator complex, composed of core subunits INTS1, INTS2, INTS3, INTS4, INTS5, INTS6, INTS7, INTS8, INTS9/RC74, INTS10, INTS11/CPSF3L, INTS12, INTS13, INTS14 and INTS15. The core complex associates with protein phosphatase 2A subunits PPP2CA and PPP2R1A, to form the Integrator-PP2A (INTAC) complex. INTS14 is part of the tail subcomplex, composed of INTS10, INTS13, INTS14 and INTS15.

The protein resides in the nucleus. Functionally, component of the integrator complex, a multiprotein complex that terminates RNA polymerase II (Pol II) transcription in the promoter-proximal region of genes. The integrator complex provides a quality checkpoint during transcription elongation by driving premature transcription termination of transcripts that are unfavorably configured for transcriptional elongation: the complex terminates transcription by (1) catalyzing dephosphorylation of the C-terminal domain (CTD) of Pol II subunit POLR2A/RPB1 and SUPT5H/SPT5, (2) degrading the exiting nascent RNA transcript via endonuclease activity and (3) promoting the release of Pol II from bound DNA. The integrator complex is also involved in terminating the synthesis of non-coding Pol II transcripts, such as enhancer RNAs (eRNAs), small nuclear RNAs (snRNAs), telomerase RNAs and long non-coding RNAs (lncRNAs). Within the integrator complex, INTS14 is part of the integrator tail module that acts as a platform for the recruitment of transcription factors at promoters. The polypeptide is Integrator complex subunit 14 (Bos taurus (Bovine)).